Consider the following 1087-residue polypeptide: Alpha-mannosidase G (1087 aa).

Zn(2+)-binding residues include histidine 264, aspartate 266, aspartate 376, and histidine 579. The active-site Nucleophile is aspartate 376.

This sequence belongs to the glycosyl hydrolase 38 family. The cofactor is Zn(2+).

It carries out the reaction Hydrolysis of terminal, non-reducing alpha-D-mannose residues in alpha-D-mannosides.. This chain is Alpha-mannosidase G (manG), found in Dictyostelium discoideum (Social amoeba).